Here is a 366-residue protein sequence, read N- to C-terminus: Putative zinc metalloprotease slr1821 (366 aa).

His-20 contributes to the Zn(2+) binding site. Glu-21 is a catalytic residue. His-24 serves as a coordination point for Zn(2+). The next 3 helical transmembrane spans lie at 95 to 115 (AIVI…LLIG), 293 to 313 (AVIN…FLLI), and 325 to 345 (FQMG…VFLI). A PDZ domain is found at 106–188 (LVFAYFLLIG…VPITVEVQRG (83 aa)).

It belongs to the peptidase M50B family. Zn(2+) serves as cofactor.

It is found in the cell inner membrane. The protein is Putative zinc metalloprotease slr1821 of Synechocystis sp. (strain ATCC 27184 / PCC 6803 / Kazusa).